Reading from the N-terminus, the 495-residue chain is Protein nucleotidyltransferase YdiU (495 aa).

G92, G94, R95, K114, D126, G127, R177, and R184 together coordinate ATP. The Proton acceptor role is filled by D261. Positions 262 and 271 each coordinate Mg(2+). D271 provides a ligand contact to ATP.

The protein belongs to the SELO family. It depends on Mg(2+) as a cofactor. The cofactor is Mn(2+).

The catalysed reaction is L-seryl-[protein] + ATP = 3-O-(5'-adenylyl)-L-seryl-[protein] + diphosphate. The enzyme catalyses L-threonyl-[protein] + ATP = 3-O-(5'-adenylyl)-L-threonyl-[protein] + diphosphate. It carries out the reaction L-tyrosyl-[protein] + ATP = O-(5'-adenylyl)-L-tyrosyl-[protein] + diphosphate. It catalyses the reaction L-histidyl-[protein] + UTP = N(tele)-(5'-uridylyl)-L-histidyl-[protein] + diphosphate. The catalysed reaction is L-seryl-[protein] + UTP = O-(5'-uridylyl)-L-seryl-[protein] + diphosphate. The enzyme catalyses L-tyrosyl-[protein] + UTP = O-(5'-uridylyl)-L-tyrosyl-[protein] + diphosphate. Nucleotidyltransferase involved in the post-translational modification of proteins. It can catalyze the addition of adenosine monophosphate (AMP) or uridine monophosphate (UMP) to a protein, resulting in modifications known as AMPylation and UMPylation. This chain is Protein nucleotidyltransferase YdiU, found in Bordetella bronchiseptica (strain ATCC BAA-588 / NCTC 13252 / RB50) (Alcaligenes bronchisepticus).